Reading from the N-terminus, the 349-residue chain is N-lysine methyltransferase KMT5A (349 aa).

A disordered region spans residues 18–46; sequence AAVAATAPGPEMVEQRGPGRPRSDGENVF. Serine 57 carries the phosphoserine modification. Residues 65–207 form a disordered region; the sequence is RSPLQEENSV…SEERKKNELI (143 aa). The span at 107 to 119 shows a compositional bias: basic and acidic residues; the sequence is VKSDEQKSKDTRR. At threonine 138 the chain carries Phosphothreonine. Basic residues predominate over residues 154–170; sequence ALKKSLKGKQAPRKKSQ. Residues 192-207 are compositionally biased toward basic and acidic residues; that stretch reads SKAELQSEERKKNELI. Residues 213-334 form the SET domain; the sequence is EGMKIDLIDG…AGEELLYDYG (122 aa). Residues 223–225, tyrosine 268, and 295–296 contribute to the S-adenosyl-L-methionine site; these read KGR and NH.

Belongs to the class V-like SAM-binding methyltransferase superfamily. Histone-lysine methyltransferase family. PR/SET subfamily. Interacts with L3MBTL1. Interacts with SIRT2 (phosphorylated form); the interaction is direct, stimulates KMT5A-mediated methyltransferase activity at histone H4 'Lys-20' (H4K20me1) and is increased in a H(2)O(2)-induced oxidative stress-dependent manner. Post-translationally, ubiquitinated and degraded by the DCX(DTL) complex.

Its subcellular location is the nucleus. The protein localises to the chromosome. It catalyses the reaction L-lysyl(20)-[histone H4] + S-adenosyl-L-methionine = N(6)-methyl-L-lysyl(20)-[histone H4] + S-adenosyl-L-homocysteine + H(+). The enzyme catalyses L-lysyl-[protein] + S-adenosyl-L-methionine = N(6)-methyl-L-lysyl-[protein] + S-adenosyl-L-homocysteine + H(+). Protein-lysine N-methyltransferase that monomethylates both histones and non-histone proteins. Specifically monomethylates 'Lys-20' of histone H4 (H4K20me1). H4K20me1 is enriched during mitosis and represents a specific tag for epigenetic transcriptional repression. Mainly functions in euchromatin regions, thereby playing a central role in the silencing of euchromatic genes. Required for cell proliferation, probably by contributing to the maintenance of proper higher-order structure of DNA during mitosis. Involved in chromosome condensation and proper cytokinesis. Nucleosomes are preferred as substrate compared to free histones. Mediates monomethylation of p53/TP53 at 'Lys-382', leading to repress p53/TP53-target genes. Plays a negative role in TGF-beta response regulation and a positive role in cell migration. This chain is N-lysine methyltransferase KMT5A, found in Mus musculus (Mouse).